Consider the following 489-residue polypeptide: Ketol-acid reductoisomerase (NADP(+)) (489 aa).

The 192-residue stretch at 16–207 folds into the KARI N-terminal Rossmann domain; it reads IKKCRFMEKK…GGHRAGVLES (192 aa). NADP(+)-binding positions include 44–47, R67, S77, and 107–109; these read CGSQ and DKQ. The active site involves H131. G157 is an NADP(+) binding site. KARI C-terminal knotted domains follow at residues 208–343 and 344–483; these read SFVA…QSPD and YDKK…MKNM. D216, E220, E388, and E392 together coordinate Mg(2+). Residue S413 participates in substrate binding.

The protein belongs to the ketol-acid reductoisomerase family. Mg(2+) serves as cofactor.

It catalyses the reaction (2R)-2,3-dihydroxy-3-methylbutanoate + NADP(+) = (2S)-2-acetolactate + NADPH + H(+). The catalysed reaction is (2R,3R)-2,3-dihydroxy-3-methylpentanoate + NADP(+) = (S)-2-ethyl-2-hydroxy-3-oxobutanoate + NADPH + H(+). It participates in amino-acid biosynthesis; L-isoleucine biosynthesis; L-isoleucine from 2-oxobutanoate: step 2/4. Its pathway is amino-acid biosynthesis; L-valine biosynthesis; L-valine from pyruvate: step 2/4. Involved in the biosynthesis of branched-chain amino acids (BCAA). Catalyzes an alkyl-migration followed by a ketol-acid reduction of (S)-2-acetolactate (S2AL) to yield (R)-2,3-dihydroxy-isovalerate. In the isomerase reaction, S2AL is rearranged via a Mg-dependent methyl migration to produce 3-hydroxy-3-methyl-2-ketobutyrate (HMKB). In the reductase reaction, this 2-ketoacid undergoes a metal-dependent reduction by NADPH to yield (R)-2,3-dihydroxy-isovalerate. The sequence is that of Ketol-acid reductoisomerase (NADP(+)) from Buchnera aphidicola subsp. Diuraphis noxia.